A 237-amino-acid polypeptide reads, in one-letter code: Sulfolipid-1 exporter Sap (237 aa).

6 helical membrane passes run 5-25 (VLVLALSVICEPVRIGLVVLM), 38-58 (FLCGGYTMAGGVAMVTLVVLG), 66-86 (FSVAEVQIGTGLIALLIAFAL), 141-161 (VSGLGAALPSANYMGAMAAIL), 171-191 (ALAVVTFNVVAFTVAEVPLVS), and 217-237 (DAALLVAAGGCLMLTLGLSNL).

This sequence belongs to the peptidoglycolipid addressing protein (GAP) (TC 2.A.116) family.

Its subcellular location is the cell inner membrane. Its function is as follows. Required for the transport across the inner membrane of sulfolipid-1 (SL-1), which is a major cell wall lipid of pathogenic mycobacteria. Could also transport SL1278 (2-palmitoyl-3-(C43)-phthioceranyl-alpha, alpha'-D-trehalose-2'-sulfate), which is the precursor of SL-1. May potentiate SL-1 levels and confer specificity for sulfolipids over structurally similar glycolipids. This Mycobacterium tuberculosis (strain ATCC 25618 / H37Rv) protein is Sulfolipid-1 exporter Sap.